The following is a 190-amino-acid chain: Nucleoside triphosphate pyrophosphatase (190 aa).

Catalysis depends on Asp69, which acts as the Proton acceptor.

This sequence belongs to the Maf family. A divalent metal cation is required as a cofactor.

It localises to the cytoplasm. It catalyses the reaction a ribonucleoside 5'-triphosphate + H2O = a ribonucleoside 5'-phosphate + diphosphate + H(+). It carries out the reaction a 2'-deoxyribonucleoside 5'-triphosphate + H2O = a 2'-deoxyribonucleoside 5'-phosphate + diphosphate + H(+). Its function is as follows. Nucleoside triphosphate pyrophosphatase. May have a dual role in cell division arrest and in preventing the incorporation of modified nucleotides into cellular nucleic acids. This is Nucleoside triphosphate pyrophosphatase from Helicobacter pylori (strain HPAG1).